Consider the following 141-residue polypeptide: Large ribosomal subunit protein uL11 (141 aa).

Belongs to the universal ribosomal protein uL11 family. As to quaternary structure, part of the ribosomal stalk of the 50S ribosomal subunit. Interacts with L10 and the large rRNA to form the base of the stalk. L10 forms an elongated spine to which L12 dimers bind in a sequential fashion forming a multimeric L10(L12)X complex. In terms of processing, one or more lysine residues are methylated.

Its function is as follows. Forms part of the ribosomal stalk which helps the ribosome interact with GTP-bound translation factors. The protein is Large ribosomal subunit protein uL11 of Acetivibrio thermocellus (strain ATCC 27405 / DSM 1237 / JCM 9322 / NBRC 103400 / NCIMB 10682 / NRRL B-4536 / VPI 7372) (Clostridium thermocellum).